A 153-amino-acid polypeptide reads, in one-letter code: MSVLKEFKEFAVKGNVIDLAVGVVIGGAFGSIVKSLVDDVIMPPIGLLIGNVDFSNLFFVLKDGAKQAGPYVSVAAAKQAGATTLNLGLFINALVSFTIVAFAIFMLVKAINRLKREEAAPAPAAPATKECRYCLSAIPEKATRCPCCTSQLD.

A run of 2 helical transmembrane segments spans residues 16-36 (VIDLAVGVVIGGAFGSIVKSL) and 88-108 (GLFINALVSFTIVAFAIFMLV).

It belongs to the MscL family. As to quaternary structure, homopentamer.

Its subcellular location is the cell inner membrane. Channel that opens in response to stretch forces in the membrane lipid bilayer. May participate in the regulation of osmotic pressure changes within the cell. In Chromobacterium violaceum (strain ATCC 12472 / DSM 30191 / JCM 1249 / CCUG 213 / NBRC 12614 / NCIMB 9131 / NCTC 9757 / MK), this protein is Large-conductance mechanosensitive channel.